A 542-amino-acid chain; its full sequence is Chaperonin GroEL 3 (542 aa).

Residues 30–33 (TLGP), Lys51, 87–91 (DGTTT), Gly415, and Asp496 contribute to the ATP site.

The protein belongs to the chaperonin (HSP60) family. In terms of assembly, forms a cylinder of 14 subunits composed of two heptameric rings stacked back-to-back. Interacts with the co-chaperonin GroES.

Its subcellular location is the cytoplasm. The catalysed reaction is ATP + H2O + a folded polypeptide = ADP + phosphate + an unfolded polypeptide.. Its function is as follows. Together with its co-chaperonin GroES, plays an essential role in assisting protein folding. The GroEL-GroES system forms a nano-cage that allows encapsulation of the non-native substrate proteins and provides a physical environment optimized to promote and accelerate protein folding. In Sinorhizobium medicae (strain WSM419) (Ensifer medicae), this protein is Chaperonin GroEL 3.